Consider the following 329-residue polypeptide: tRNA-modifying protein YgfZ (329 aa).

Residues W27 and W189 each contribute to the folate site.

It belongs to the tRNA-modifying YgfZ family.

It localises to the cytoplasm. In terms of biological role, folate-binding protein involved in regulating the level of ATP-DnaA and in the modification of some tRNAs. It is probably a key factor in regulatory networks that act via tRNA modification, such as initiation of chromosomal replication. In Cronobacter sakazakii (strain ATCC BAA-894) (Enterobacter sakazakii), this protein is tRNA-modifying protein YgfZ.